The following is a 145-amino-acid chain: MPSQKSPTKRSPTKRSPTKRSPQKGGKGGKGAKRGGKAGKRRRGVQVKRRRRRRESYGIYIYKVLKQVHPDTGISSRAMSVMNSFVNDVFERIAAEAGRLTTYNRRSTVSSREVQTAVRLLLPGELAKHAVSEGTKAVTKYTTSR.

The tract at residues 1-52 (MPSQKSPTKRSPTKRSPTKRSPQKGGKGGKGAKRGGKAGKRRRGVQVKRRRR) is disordered. 4 short sequence motifs (SPKK motif) span residues 6-9 (SPTK), 11-14 (SPTK), 16-19 (SPTK), and 21-24 (SPQK). Composition is skewed to basic residues over residues 7 to 22 (PTKR…KRSP) and 30 to 52 (KGAK…RRRR). Residues serine 16 and serine 21 each carry the phosphoserine modification. Serine 132 carries O-linked (GlcNAc) serine glycosylation. Lysine 140 participates in a covalent cross-link: Glycyl lysine isopeptide (Lys-Gly) (interchain with G-Cter in ubiquitin).

This sequence belongs to the histone H2B family. In terms of assembly, the nucleosome is a histone octamer containing two molecules each of H2A, H2B, H3 and H4 assembled in one H3-H4 heterotetramer and two H2A-H2B heterodimers. The octamer wraps approximately 147 bp of DNA. Monoubiquitination of Lys-140 gives a specific tag for epigenetic transcriptional activation and is also prerequisite for histone H3 'Lys-4' and 'Lys-79' methylation. In terms of processing, phosphorylated on SPKK motifs 3 and 4; which may regulate DNA binding. Dephosphorylated during maturation of spermatids to mature sperm and rephosphorylated at fertilization. Post-translationally, glcNAcylation at Ser-132 promotes monoubiquitination of Lys-140. It fluctuates in response to extracellular glucose, and associates with transcribed genes.

The protein resides in the nucleus. The protein localises to the chromosome. Its function is as follows. Core component of nucleosome. Nucleosomes wrap and compact DNA into chromatin, limiting DNA accessibility to the cellular machineries which require DNA as a template. Histones thereby play a central role in transcription regulation, DNA repair, DNA replication and chromosomal stability. DNA accessibility is regulated via a complex set of post-translational modifications of histones, also called histone code, and nucleosome remodeling. This is Histone H2B.1, sperm from Parechinus angulosus (Angulate sea urchin).